Here is a 613-residue protein sequence, read N- to C-terminus: Ribosome-associated molecular chaperone SSB1 (613 aa).

The tract at residues 1–391 is nucleotide binding domain (NBD); the sequence is MAEGVFSGAI…ILTGSNLSDD (391 aa). Residues 16 to 18, K73, 205 to 207, 271 to 278, and G342 each bind ATP; these read TTY, GGT, and ERAKRTLS. An inter-domain linker region spans residues 392–402; that stretch reads TKDLLLLDVAP. Residues 403 to 613 are substrate binding domain (SBD); it reads LSLGVAMQGD…RVVTKAMATR (211 aa). Residues 516-612 form a lid domain (SBDalpha) region; that stretch reads SEDIEKMVSQ…KRVVTKAMAT (97 aa). Positions 574 to 582 match the Nuclear export signal motif; the sequence is VEAALADAF.

Belongs to the heat shock protein 70 family. Ssb-type Hsp70 subfamily. In terms of assembly, binds to ribosomes. Binds close to the ribosomal tunnel exit via contacts with both ribosomal proteins and rRNA. Directly interacts with nascent polypeptides. This interaction is dependent on the ribosome-associated complex (RAC). Interacts with SSE1. Interacts with FES1.

It is found in the cytoplasm. It catalyses the reaction ATP + H2O = ADP + phosphate + H(+). Its function is as follows. Ribosome-bound, Hsp70-type chaperone that assists in the cotranslational folding of newly synthesized proteins in the cytosol. Stimulates folding by interacting with nascent chains, binding to short, largely hydrophobic sequences exposed by unfolded proteins, thereby stabilizing longer, more slowly translated, and aggregation-prone nascent polypeptides and domains that cannot fold stably until fully synthesized. The Hsp70-protein substrate interaction depends on ATP-binding and on allosteric regulation between the NBD and the SBD. The ATP-bound state is characterized by a fast exchange rate of substrate (low affinity state), while in the ADP-bound state exchange is much slower (high affinity state). During the Hsp70 cycle, the chaperone switches between the ATP-bound state (open conformation) and the ADP-bound state (closed conformation) by major conformational rearrangements involving mainly the lid domain. Ssb cooperates with a specific Hsp40/Hsp70 co-chaperone termed the ribosome-associated complex (RAC), which stimulates the ATPase activity of the ribosome-associated pool of Ssbs and switches it to the high affinity substrate binding state. Hsp110 chaperone SSE1 and FES1 act as nucleotide exchange factors that cause substrate release. The sequence is that of Ribosome-associated molecular chaperone SSB1 (SSB1) from Eremothecium gossypii (strain ATCC 10895 / CBS 109.51 / FGSC 9923 / NRRL Y-1056) (Yeast).